We begin with the raw amino-acid sequence, 161 residues long: RNA pyrophosphohydrolase (161 aa).

One can recognise a Nudix hydrolase domain in the interval 12-154 (PYRPGVGMMI…KRKLYQAVVK (143 aa)). The short motif at 46-67 (GGIVPGETPSIAAMREMLEEIG) is the Nudix box element.

Belongs to the Nudix hydrolase family. RppH subfamily. Requires a divalent metal cation as cofactor.

Accelerates the degradation of transcripts by removing pyrophosphate from the 5'-end of triphosphorylated RNA, leading to a more labile monophosphorylated state that can stimulate subsequent ribonuclease cleavage. The chain is RNA pyrophosphohydrolase from Rickettsia bellii (strain OSU 85-389).